Here is a 441-residue protein sequence, read N- to C-terminus: Ribosomal protein uS12 methylthiotransferase RimO (441 aa).

Residues 5–116 (PTIAFTHLGC…IVDVMQRVEK (112 aa)) enclose the MTTase N-terminal domain. The [4Fe-4S] cluster site is built by cysteine 14, cysteine 50, cysteine 79, cysteine 154, cysteine 158, and cysteine 161. Positions 140 to 370 (TTSEGVAYVR…EVQQSISWQQ (231 aa)) constitute a Radical SAM core domain. The 67-residue stretch at 372-438 (QKLVGQLVDV…IYDLYGCLIS (67 aa)) folds into the TRAM domain.

The protein belongs to the methylthiotransferase family. RimO subfamily. [4Fe-4S] cluster serves as cofactor.

The protein resides in the cytoplasm. It carries out the reaction L-aspartate(89)-[ribosomal protein uS12]-hydrogen + (sulfur carrier)-SH + AH2 + 2 S-adenosyl-L-methionine = 3-methylsulfanyl-L-aspartate(89)-[ribosomal protein uS12]-hydrogen + (sulfur carrier)-H + 5'-deoxyadenosine + L-methionine + A + S-adenosyl-L-homocysteine + 2 H(+). Catalyzes the methylthiolation of an aspartic acid residue of ribosomal protein uS12. The protein is Ribosomal protein uS12 methylthiotransferase RimO of Trichodesmium erythraeum (strain IMS101).